Here is a 414-residue protein sequence, read N- to C-terminus: Serine hydroxymethyltransferase (414 aa).

(6S)-5,6,7,8-tetrahydrofolate contacts are provided by residues Leu117 and 121-123 (GHL). Lys226 carries the N6-(pyridoxal phosphate)lysine modification.

It belongs to the SHMT family. In terms of assembly, homodimer. Requires pyridoxal 5'-phosphate as cofactor.

It localises to the cytoplasm. It catalyses the reaction (6R)-5,10-methylene-5,6,7,8-tetrahydrofolate + glycine + H2O = (6S)-5,6,7,8-tetrahydrofolate + L-serine. It functions in the pathway one-carbon metabolism; tetrahydrofolate interconversion. Its pathway is amino-acid biosynthesis; glycine biosynthesis; glycine from L-serine: step 1/1. Its function is as follows. Catalyzes the reversible interconversion of serine and glycine with tetrahydrofolate (THF) serving as the one-carbon carrier. This reaction serves as the major source of one-carbon groups required for the biosynthesis of purines, thymidylate, methionine, and other important biomolecules. Also exhibits THF-independent aldolase activity toward beta-hydroxyamino acids, producing glycine and aldehydes, via a retro-aldol mechanism. The polypeptide is Serine hydroxymethyltransferase (Dictyoglomus thermophilum (strain ATCC 35947 / DSM 3960 / H-6-12)).